The sequence spans 287 residues: MPNLIRTGLLMAALTALFVAIGYWIGRGAGAAIALAFAAAGNFVAYWVSDRAVLAMYGAQPANQAAFPRLVAQVDRLASKAGLPPPRVYVIDNDQPNAFATGRNPQHAAIAVTTGLLGALDEAELAGVIAHELSHIRHRDTLTMTVTATLAGAIGMISNLAIFFGGSDERRSSPFAGIAGLLLLLLAPLTATLVQLAISRTREYAADARAASLTGQPLALARALMRIDEMARWVPNDDAERNPATASLFIVNPLSGTTFDTLFATHPPIRERVARLRHMAQFDVSKN.

2 helical membrane-spanning segments follow: residues 5 to 25 (IRTG…GYWI) and 28 to 48 (GAGA…AYWV). His-131 provides a ligand contact to Zn(2+). Glu-132 is a catalytic residue. His-135 contributes to the Zn(2+) binding site. Transmembrane regions (helical) follow at residues 146-166 (VTAT…FFGG) and 174-194 (PFAG…ATLV). Glu-203 is a Zn(2+) binding site.

Belongs to the peptidase M48B family. Zn(2+) serves as cofactor.

The protein localises to the cell inner membrane. The polypeptide is Protease HtpX homolog (Acidiphilium cryptum (strain JF-5)).